The primary structure comprises 908 residues: Protein translocase subunit SecA (908 aa).

Residues glutamine 90, 108–112 (GEGKT), and aspartate 503 contribute to the ATP site. Positions 846-864 (AAAAEAPVAPAPQPAAAAP) are enriched in low complexity. The segment at 846-884 (AAAAEAPVAPAPQPAAAAPQPTPELVGAEAGEPDPAAWG) is disordered. Zn(2+) contacts are provided by cysteine 892, cysteine 894, cysteine 903, and histidine 904.

The protein belongs to the SecA family. Monomer and homodimer. Part of the essential Sec protein translocation apparatus which comprises SecA, SecYEG and auxiliary proteins SecDF-YajC and YidC. It depends on Zn(2+) as a cofactor.

It is found in the cell inner membrane. The protein resides in the cytoplasm. The enzyme catalyses ATP + H2O + cellular proteinSide 1 = ADP + phosphate + cellular proteinSide 2.. Functionally, part of the Sec protein translocase complex. Interacts with the SecYEG preprotein conducting channel. Has a central role in coupling the hydrolysis of ATP to the transfer of proteins into and across the cell membrane, serving both as a receptor for the preprotein-SecB complex and as an ATP-driven molecular motor driving the stepwise translocation of polypeptide chains across the membrane. This Cereibacter sphaeroides (strain ATCC 17029 / ATH 2.4.9) (Rhodobacter sphaeroides) protein is Protein translocase subunit SecA.